The primary structure comprises 161 residues: Probable ubiquitin-conjugating enzyme E2 17 (161 aa).

In terms of domain architecture, UBC core spans 15-161; that stretch reads IATNRLQKEF…TRWRFHDDKV (147 aa). Residue Cys99 is the Glycyl thioester intermediate of the active site.

This sequence belongs to the ubiquitin-conjugating enzyme family.

The enzyme catalyses S-ubiquitinyl-[E1 ubiquitin-activating enzyme]-L-cysteine + [E2 ubiquitin-conjugating enzyme]-L-cysteine = [E1 ubiquitin-activating enzyme]-L-cysteine + S-ubiquitinyl-[E2 ubiquitin-conjugating enzyme]-L-cysteine.. Its pathway is protein modification; protein ubiquitination. Its function is as follows. Accepts the ubiquitin from the E1 complex and catalyzes its covalent attachment to other proteins. The protein is Probable ubiquitin-conjugating enzyme E2 17 (UBC17) of Arabidopsis thaliana (Mouse-ear cress).